A 439-amino-acid polypeptide reads, in one-letter code: uncharacterized protein (439 aa).

Disordered stretches follow at residues 1-36, 126-157, and 411-439; these read MRPG…SKQA, SRTG…GVPI, and FRSD…AVPR.

This is an uncharacterized protein from Streptomyces fradiae (Streptomyces roseoflavus).